Consider the following 207-residue polypeptide: MRELTKRQSEIYNYIKQVVQTKGYPPSVREIGEAVGLASSFTVHGHLSRLEEKGYIEGDPTKPRAIEIVSDQTNDNINMEETIHVPVIGKVTAGVPITAVENIEEYFPLPEHLTSTHNSDIFILNVVGDSMIEAGILDGDKVIVRSQTIAENGDIIVAMTEEDEATVKRFYKEKNRYRLQPENSTMEPIYLDNVAVIGKVIGLYREM.

The H-T-H motif DNA-binding region spans 28 to 48 (VREIGEAVGLASSFTVHGHLS). Residues Ser130 and Lys168 each act as for autocatalytic cleavage activity in the active site.

This sequence belongs to the peptidase S24 family. In terms of assembly, homodimer.

It carries out the reaction Hydrolysis of Ala-|-Gly bond in repressor LexA.. In terms of biological role, represses a number of genes involved in the response to DNA damage (SOS response), including recA and lexA. In the presence of single-stranded DNA, RecA interacts with LexA causing an autocatalytic cleavage which disrupts the DNA-binding part of LexA, leading to derepression of the SOS regulon and eventually DNA repair. In Staphylococcus aureus (strain Newman), this protein is LexA repressor.